A 211-amino-acid chain; its full sequence is UPF0502 protein PC1_1804 (211 aa).

Positions 168–188 (SGDASDAAPEEEGAGDNSHQL) are disordered.

This sequence belongs to the UPF0502 family.

The polypeptide is UPF0502 protein PC1_1804 (Pectobacterium carotovorum subsp. carotovorum (strain PC1)).